A 543-amino-acid polypeptide reads, in one-letter code: Vibriobactin-specific 2,3-dihydroxybenzoate-AMP ligase (543 aa).

The helical transmembrane segment at 240 to 259 (FPLSSPGALGVFWAGGCVVL) threads the bilayer.

This sequence belongs to the ATP-dependent AMP-binding enzyme family.

The protein resides in the cell inner membrane. It catalyses the reaction 2,3-dihydroxybenzoate + holo-[ACP] + ATP = 2,3-dihydroxybenzoyl-[ACP] + AMP + diphosphate. Its pathway is siderophore biosynthesis; vibriobactin biosynthesis. Its function is as follows. Activation of the carboxylate group of 2,3-dihydroxy-benzoate (DHB), via ATP-dependent PPi exchange reactions, to the acyladenylate, preparing that molecule for the final stages of vibriobactin synthesis. This Vibrio cholerae serotype O1 (strain ATCC 39315 / El Tor Inaba N16961) protein is Vibriobactin-specific 2,3-dihydroxybenzoate-AMP ligase (vibE).